A 140-amino-acid polypeptide reads, in one-letter code: uncharacterized protein (140 aa).

The protein belongs to the asfivirus D129L family.

This is an uncharacterized protein from African swine fever virus (isolate Pig/Kenya/KEN-50/1950) (ASFV).